Reading from the N-terminus, the 86-residue chain is Cell division topological specificity factor (86 aa).

Belongs to the MinE family.

Functionally, prevents the cell division inhibition by proteins MinC and MinD at internal division sites while permitting inhibition at polar sites. This ensures cell division at the proper site by restricting the formation of a division septum at the midpoint of the long axis of the cell. This Rhizobium etli (strain ATCC 51251 / DSM 11541 / JCM 21823 / NBRC 15573 / CFN 42) protein is Cell division topological specificity factor.